A 138-amino-acid polypeptide reads, in one-letter code: MAALPDKDKLLRNFSRCANWEEKYLYIIELGQRLAPLSPEEYSVQNIIQGCQSQVWIVMAQDPSGIITLRGDSDAAIVKGLIAVVFILYDRMTAQDIIEFDVRPWFEKMALTQHLTPSRSQGLEAMIRAIRAKAANIS.

Catalysis depends on cysteine 51, which acts as the Cysteine persulfide intermediate.

The protein belongs to the SufE family. In terms of assembly, homodimer. Interacts with SufS.

It is found in the cytoplasm. The protein operates within cofactor biosynthesis; iron-sulfur cluster biosynthesis. Its function is as follows. Participates in cysteine desulfuration mediated by SufS. Cysteine desulfuration mobilizes sulfur from L-cysteine to yield L-alanine and constitutes an essential step in sulfur metabolism for biosynthesis of a variety of sulfur-containing biomolecules. Functions as a sulfur acceptor for SufS, by mediating the direct transfer of the sulfur atom from the S-sulfanylcysteine of SufS, an intermediate product of cysteine desulfuration process. This is Cysteine desulfuration protein SufE from Klebsiella pneumoniae (strain 342).